The following is a 298-amino-acid chain: MTDLHTDVERYLRYLSVERQLSPITLLNYQRQLEAIIHFASENGLQSWQQCDVTMVRNFAVRSRRKGLGAAGLALRLSALRSFFDWLVSQNELKANPAKGVSAPKAPRHLPKNIDVDDMSRLLDIDINDPLAVRDRAMLEVMYGAGLRLSELVGLDIKHLDLESGEVWVMGKGSKERRLPIGRNAVAWIEHWLDLRDLFGSEDDALFLSKLGKRISARNVQKRFAEWGIKQGLNNHVHPHKLRHSFATHMLESSGDLRGVQELLGHANLSTTQIYTHLDFQHLASVYDAAHPRAKRGK.

Positions 2–88 constitute a Core-binding (CB) domain; that stretch reads TDLHTDVERY…ALRSFFDWLV (87 aa). Positions 109–288 constitute a Tyr recombinase domain; it reads HLPKNIDVDD…DFQHLASVYD (180 aa). Residues arginine 148, lysine 172, histidine 240, arginine 243, and histidine 266 contribute to the active site. Tyrosine 275 (O-(3'-phospho-DNA)-tyrosine intermediate) is an active-site residue.

Belongs to the 'phage' integrase family. XerC subfamily. Forms a cyclic heterotetrameric complex composed of two molecules of XerC and two molecules of XerD, in which XerC interacts with XerD via its C-terminal region, XerD interacts with XerC via its C-terminal region and so on.

The protein resides in the cytoplasm. FtsK may regulate the catalytic switch between XerC and XerD in the heterotetrameric complex during the two steps of the recombination process. Site-specific tyrosine recombinase, which acts by catalyzing the cutting and rejoining of the recombining DNA molecules. Binds cooperatively to specific DNA consensus sequences that are separated from XerD binding sites by a short central region, forming the heterotetrameric XerC-XerD complex that recombines DNA substrates. The complex is essential to convert dimers of the bacterial chromosome into monomers to permit their segregation at cell division. It also contributes to the segregational stability of plasmids. In the complex XerC specifically exchanges the top DNA strands. The sequence is that of Tyrosine recombinase XerC from Escherichia coli O6:K15:H31 (strain 536 / UPEC).